Here is a 784-residue protein sequence, read N- to C-terminus: Protein Skeletor, isoforms B/C (784 aa).

The signal sequence occupies residues 1 to 28 (MLAMKDKPWLLLFGLLAALSCLASFGDA). DM13 domains follow at residues 34–143 (GTKI…VSIP) and 151–258 (PQKI…VRLP). The DOMON domain occupies 287–419 (LAFEVRWAVA…GAESVVWAIG (133 aa)). The disordered stretch occupies residues 451–491 (PLPEGARGNSNSSEQEDSAPAAQSSTGGAGYPPAGRPNVEP).

Interacts with Chro and Mgtor as part of a macromolecular complex forming the spindle matrix. Chro colocalizes with Skeletor (Skel) on the chromosomes at interphase and on spindle during metaphase.

It localises to the cytoplasm. The protein resides in the cytoskeleton. Its subcellular location is the spindle. The protein localises to the nucleus. It is found in the nucleolus. It localises to the chromosome. Its function is as follows. Provides structural support to stabilize and organize the microtubule spindle during mitosis (within embryonic somatic cells) and meiosis (within spermatocytes). The role in mitosis regulation depends on the Ran pathway. This is Protein Skeletor, isoforms B/C from Drosophila melanogaster (Fruit fly).